A 1019-amino-acid polypeptide reads, in one-letter code: Limulus clotting factor C (1019 aa).

The first 25 residues, 1-25, serve as a signal peptide directing secretion; that stretch reads MVLASFLVSGLVLGLLAQKMRPVQS. An EGF-like domain is found at 102–137; that stretch reads YGTWCSGECQCKNGGICDQRTGACACRDRYEGVHCE. 17 disulfides stabilise this stretch: cysteine 106-cysteine 118, cysteine 112-cysteine 125, cysteine 127-cysteine 136, cysteine 142-cysteine 182, cysteine 168-cysteine 195, cysteine 199-cysteine 241, cysteine 227-cysteine 254, cysteine 260-cysteine 308, cysteine 294-cysteine 321, cysteine 331-cysteine 350, cysteine 354-cysteine 374, cysteine 436-cysteine 447, cysteine 464-cysteine 564, cysteine 538-cysteine 556, cysteine 576-cysteine 621, cysteine 607-cysteine 634, and cysteine 720-cysteine 748. Sushi domains follow at residues 140–197, 198–256, and 258–323; these read KGCP…KCIR, ECAM…QCKN, and VFCP…SCVK. The region spanning 325–421 is the LCCL domain; that stretch reads ADREVDCDSK…EELKSLARSF (97 aa). A C-type lectin domain is found at 436-568; it reads CPDGWFEVDE…PSSFACMMDL (133 aa). N-linked (GlcNAc...) asparagine glycosylation is found at asparagine 523 and asparagine 534. Sushi domains lie at 574 to 636 and 689 to 750; these read AKCD…RCIK and PRSS…SCIP. Asparagine 624, asparagine 740, and asparagine 767 each carry an N-linked (GlcNAc...) asparagine glycan. Positions 763–1019 constitute a Peptidase S1 domain; it reads IWNGNSTEIG…VFLSWIRQFI (257 aa). A disulfide bond links cysteine 794 and cysteine 810. Catalysis depends on charge relay system residues histidine 809 and aspartate 865. Asparagine 912 carries an N-linked (GlcNAc...) asparagine glycan. Cysteine 932 and cysteine 951 are oxidised to a cystine. Aspartate 960 contributes to the substrate binding site. Residues cysteine 962 and cysteine 996 are joined by a disulfide bond. The active-site Charge relay system is the serine 966.

This sequence belongs to the peptidase S1 family. In terms of assembly, heterodimer of a light chain and a heavy chain linked by a disulfide bond.

It is found in the secreted. It catalyses the reaction Selective cleavage of 103-Arg-|-Ser-104 and 124-Ile-|-Ile-125 bonds in Limulus clotting factor B to form activated factor B. Cleavage of -Pro-Arg-|-Xaa- bonds in synthetic substrates.. With respect to regulation, activated by Gram-negative bacterial lipopolysaccharides and chymotrypsin. Functionally, this enzyme is closely associated with an endotoxin-sensitive hemolymph coagulation system which may play important roles in both hemostasis and host defense mechanisms. Its active form catalyzes the activation of factor B. The polypeptide is Limulus clotting factor C (Carcinoscorpius rotundicauda (Mangrove horseshoe crab)).